The sequence spans 209 residues: MSSQYSNVENLSPQTIRQVMRELQEMETTPPEGIKVLINESDVTDIQALIDGPAGTPYAAGIFRVKLTLNKDFPLTPPKAYFLTKIFHPNVAANGEICVNTLKKDWKPDLGIKHILLTIKCLLIVPNPESALNEEAGKMLLERYDDYSQRARMMTEIHAQPAKCGVGATGDAKDDGGPSTKKHAGLDKKLQDKKKEKLLKEKKRMLKRL.

Positions 14–160 (QTIRQVMREL…ARMMTEIHAQ (147 aa)) constitute a UBC core domain. Cys98 (glycyl thioester intermediate) is an active-site residue. The interval 165–209 (GVGATGDAKDDGGPSTKKHAGLDKKLQDKKKEKLLKEKKRMLKRL) is disordered. The segment covering 184 to 199 (AGLDKKLQDKKKEKLL) has biased composition (basic and acidic residues). Basic residues predominate over residues 200–209 (KEKKRMLKRL).

It belongs to the ubiquitin-conjugating enzyme family.

It carries out the reaction S-ubiquitinyl-[E1 ubiquitin-activating enzyme]-L-cysteine + [E2 ubiquitin-conjugating enzyme]-L-cysteine = [E1 ubiquitin-activating enzyme]-L-cysteine + S-ubiquitinyl-[E2 ubiquitin-conjugating enzyme]-L-cysteine.. It participates in protein modification; protein ubiquitination. Catalyzes the covalent attachment of ubiquitin to other proteins. Acts as an essential factor of the anaphase promoting complex/cyclosome (APC/C), a cell cycle-regulated ubiquitin ligase that controls progression through mitosis. Acts by specifically elongating polyubiquitin chains initiated by the E2 enzyme vih/UbcH10 on APC/C substrates, enhancing the degradation of APC/C substrates by the proteasome and promoting mitotic exit. The sequence is that of Ubiquitin-conjugating enzyme E2 S from Drosophila simulans (Fruit fly).